A 183-amino-acid chain; its full sequence is Adenine phosphoribosyltransferase (183 aa).

This sequence belongs to the purine/pyrimidine phosphoribosyltransferase family. In terms of assembly, homodimer.

The protein resides in the cytoplasm. The enzyme catalyses AMP + diphosphate = 5-phospho-alpha-D-ribose 1-diphosphate + adenine. It participates in purine metabolism; AMP biosynthesis via salvage pathway; AMP from adenine: step 1/1. Functionally, catalyzes a salvage reaction resulting in the formation of AMP, that is energically less costly than de novo synthesis. The protein is Adenine phosphoribosyltransferase of Shewanella pealeana (strain ATCC 700345 / ANG-SQ1).